Consider the following 401-residue polypeptide: Multidrug resistance protein MdtA (401 aa).

Residues 1-20 (MNQNNKHRTLLFRAALAAIA) form the signal peptide.

It belongs to the membrane fusion protein (MFP) (TC 8.A.1) family. In terms of assembly, part of a tripartite efflux system composed of MdtA, MdtB and MdtC.

The protein resides in the cell inner membrane. This Photorhabdus laumondii subsp. laumondii (strain DSM 15139 / CIP 105565 / TT01) (Photorhabdus luminescens subsp. laumondii) protein is Multidrug resistance protein MdtA.